We begin with the raw amino-acid sequence, 344 residues long: MSKQYEAAGVSLTAGYESVSRMKKHVARSMRKEVMTGLGSFGAMFDLSQLNLKEPVLVSGTDGVGTKLKLAFALDQHDTIGIDCVAMCVNDIIVQGAEPLYFLDYIALGKAIPAKIERIVAGVAEGCVQSGCTLIGGETAEMPGMYADGEYDIAGFAVGAVEKQKLITGEHVQPGDVILGLASSGVHSNGFSLVRKIVAESGLRYEDELMMFGSTIGNTLLMPTRIYVEAVKAALETEKIQAMVHITGGGFYENVPRVLPEGCGATFDPKKWPTLPVFDWLEQAGNVPRHDMYNVFNMGIGYMMIVKPEDVAAVSARLARENETVYTIGTVTSEPGVRILGVDQ.

The protein belongs to the AIR synthase family.

It localises to the cytoplasm. The enzyme catalyses 2-formamido-N(1)-(5-O-phospho-beta-D-ribosyl)acetamidine + ATP = 5-amino-1-(5-phospho-beta-D-ribosyl)imidazole + ADP + phosphate + H(+). Its pathway is purine metabolism; IMP biosynthesis via de novo pathway; 5-amino-1-(5-phospho-D-ribosyl)imidazole from N(2)-formyl-N(1)-(5-phospho-D-ribosyl)glycinamide: step 2/2. The protein is Phosphoribosylformylglycinamidine cyclo-ligase of Exiguobacterium sibiricum (strain DSM 17290 / CCUG 55495 / CIP 109462 / JCM 13490 / 255-15).